Here is a 270-residue protein sequence, read N- to C-terminus: MQGNNLQPPSPRPLECWSLHREAPQRTEASRTHPSPFLALPGSHRTANQAQVVPGLVHHPQENTQRLRIRAGLSPFPRARLAAIGSTHGHRWVPGICLPRCLCPASCALHACPPHCNNAEAHSWLRLGGPLQSRSVEHQQHACGWGWVTHATYGERGTSQAAERQRIAHTRALSVGNCPRSHFQCEFSSISKWSEGTGTFSPRPRAVKSGVGGQPSPHIRITWRSCTTLTSKPCSRAITPECVVGWSRRSRHWYSDMRTGECQGLSPITR.

Residues 22–31 are compositionally biased toward basic and acidic residues; that stretch reads EAPQRTEASR. Residues 22–42 form a disordered region; the sequence is EAPQRTEASRTHPSPFLALPG.

This is an uncharacterized protein from Homo sapiens (Human).